We begin with the raw amino-acid sequence, 290 residues long: Elongation factor Ts (290 aa).

Residues 80 to 83 (TDFV) are involved in Mg(2+) ion dislocation from EF-Tu.

Belongs to the EF-Ts family.

Its subcellular location is the cytoplasm. Associates with the EF-Tu.GDP complex and induces the exchange of GDP to GTP. It remains bound to the aminoacyl-tRNA.EF-Tu.GTP complex up to the GTP hydrolysis stage on the ribosome. This is Elongation factor Ts from Neorickettsia sennetsu (strain ATCC VR-367 / Miyayama) (Ehrlichia sennetsu).